The sequence spans 289 residues: ATP synthase gamma chain (289 aa).

The protein belongs to the ATPase gamma chain family. In terms of assembly, F-type ATPases have 2 components, CF(1) - the catalytic core - and CF(0) - the membrane proton channel. CF(1) has five subunits: alpha(3), beta(3), gamma(1), delta(1), epsilon(1). CF(0) has three main subunits: a, b and c.

The protein resides in the cell inner membrane. In terms of biological role, produces ATP from ADP in the presence of a proton gradient across the membrane. The gamma chain is believed to be important in regulating ATPase activity and the flow of protons through the CF(0) complex. The chain is ATP synthase gamma chain from Halorhodospira halophila (strain DSM 244 / SL1) (Ectothiorhodospira halophila (strain DSM 244 / SL1)).